Here is a 300-residue protein sequence, read N- to C-terminus: MSYRELVVELAREHAEALSDALLDLGALSVSVEDADADTPDEQPLFGEPGLVPERTAWQHSRVVALLSPDLEPAVLLAAAANEIGIADTPKFDVREVEEQDWVRLTQSQFEPIPIGERIWVVPSWHDAPDPDALILELDPGLAFGTGSHPTTRLCMEWLEQTVKPGQSVLDYGCGSGILAILARKCGADPVIGIDIDPQAVESARQNSERNHADVTYGLPDACPDGEFDIVVANILSNPLKLMASMLASKVKPGGRIALSGVLARQADEVAAVYARYVDISVWREHEGWVCLAGTRRESH.

S-adenosyl-L-methionine-binding residues include T152, G173, D195, and N234.

Belongs to the methyltransferase superfamily. PrmA family.

The protein resides in the cytoplasm. It catalyses the reaction L-lysyl-[protein] + 3 S-adenosyl-L-methionine = N(6),N(6),N(6)-trimethyl-L-lysyl-[protein] + 3 S-adenosyl-L-homocysteine + 3 H(+). Its function is as follows. Methylates ribosomal protein L11. This chain is Ribosomal protein L11 methyltransferase, found in Burkholderia vietnamiensis (strain G4 / LMG 22486) (Burkholderia cepacia (strain R1808)).